The primary structure comprises 387 residues: Pepsin II-1 (387 aa).

Positions 1 to 15 (MKWLLLLGLLALSEC) are cleaved as a signal peptide. Positions 16–59 (IVHKVPLVRKKSLRKNLIEKGLLQDYLKTHTPNLATKYFPKETF) are cleaved as a propeptide — activation peptide. One can recognise a Peptidase A1 domain in the interval 75–384 (YFGTISIGTP…DRANNQVGLA (310 aa)). The active site involves aspartate 93. Residues cysteine 106 and cysteine 111 are joined by a disulfide bond. Residue serine 129 is modified to Phosphoserine. Cysteines 267 and 271 form a disulfide. The active site involves aspartate 276. A disulfide bridge links cysteine 310 with cysteine 343.

It belongs to the peptidase A1 family.

The protein localises to the secreted. The catalysed reaction is Preferential cleavage: hydrophobic, preferably aromatic, residues in P1 and P1' positions. Cleaves 1-Phe-|-Val-2, 4-Gln-|-His-5, 13-Glu-|-Ala-14, 14-Ala-|-Leu-15, 15-Leu-|-Tyr-16, 16-Tyr-|-Leu-17, 23-Gly-|-Phe-24, 24-Phe-|-Phe-25 and 25-Phe-|-Tyr-26 bonds in the B chain of insulin.. In terms of biological role, shows particularly broad specificity; although bonds involving phenylalanine and leucine are preferred, many others are also cleaved to some extent. In Oryctolagus cuniculus (Rabbit), this protein is Pepsin II-1.